A 372-amino-acid chain; its full sequence is N-methyl-L-tryptophan oxidase (372 aa).

Position 4–34 (aspartate 4–histidine 34) interacts with FAD. The residue at position 307 (cysteine 307) is an S-8alpha-FAD cysteine.

It belongs to the MSOX/MTOX family. MTOX subfamily. Monomer. Requires FAD as cofactor.

The catalysed reaction is N(alpha)-methyl-L-tryptophan + O2 + H2O = L-tryptophan + formaldehyde + H2O2. In terms of biological role, catalyzes the oxidative demethylation of N-methyl-L-tryptophan. This chain is N-methyl-L-tryptophan oxidase, found in Salmonella typhimurium (strain LT2 / SGSC1412 / ATCC 700720).